The following is a 256-amino-acid chain: NH(3)-dependent NAD(+) synthetase (256 aa).

29–36 (GISGGIDS) contacts ATP. Residue Asp-35 participates in Mg(2+) binding. Arg-115 contacts deamido-NAD(+). Residue Thr-135 coordinates ATP. Glu-140 lines the Mg(2+) pocket. The deamido-NAD(+) site is built by Lys-148 and Asp-155. The ATP site is built by Lys-164 and Ser-186. Position 245-246 (245-246 (HK)) interacts with deamido-NAD(+).

This sequence belongs to the NAD synthetase family. As to quaternary structure, homodimer.

The enzyme catalyses deamido-NAD(+) + NH4(+) + ATP = AMP + diphosphate + NAD(+) + H(+). It participates in cofactor biosynthesis; NAD(+) biosynthesis; NAD(+) from deamido-NAD(+) (ammonia route): step 1/1. Its function is as follows. Catalyzes the ATP-dependent amidation of deamido-NAD to form NAD. Uses ammonia as a nitrogen source. In Methanosarcina mazei (strain ATCC BAA-159 / DSM 3647 / Goe1 / Go1 / JCM 11833 / OCM 88) (Methanosarcina frisia), this protein is NH(3)-dependent NAD(+) synthetase.